The chain runs to 100 residues: Probable antitoxin MazE4 (100 aa).

Residues 77–100 (PYESEAERSAARARRNARQQRSAQ) are disordered.

As to quaternary structure, forms a complex with cognate toxin MazF4.

Functionally, antitoxin component of a type II toxin-antitoxin (TA) system. Labile antitoxin that binds to cognate MazF4 toxin and counteracts its endoribonuclease activity. This chain is Probable antitoxin MazE4 (mazE4), found in Mycobacterium tuberculosis (strain CDC 1551 / Oshkosh).